Consider the following 278-residue polypeptide: Probable aquaporin PIP2-8 (278 aa).

Methionine 1 is subject to N-acetylmethionine. Topologically, residues 1-36 (MSKEVSEEGRHGKDYVDPPPAPLLDMAELKLWSFYR) are cytoplasmic. Lysine 3 is subject to N6,N6-dimethyllysine. The helical transmembrane segment at 37–57 (AIIAEFIATLLFLYVTVATVI) threads the bilayer. The Extracellular segment spans residues 58–74 (GHKNQTGPCGGVGLLGI). Residues 75–95 (AWAFGGMIFVLVYCTAGISGG) form a helical membrane-spanning segment. At 96–116 (HINPAVTFGLFLARKVSLPRA) the chain is on the cytoplasmic side. The NPA 1 motif lies at 98–100 (NPA). The chain crosses the membrane as a helical span at residues 117 to 137 (VAYMVAQCLGAICGVGLVKAF). Over 138–158 (MMTPYKRLGGGANTVADGYST) the chain is Extracellular. A helical transmembrane segment spans residues 159 to 179 (GTALGAEIIGTFVLVYTVFSA). The Cytoplasmic portion of the chain corresponds to 180–192 (TDPKRSARDSHVP). Residues 193 to 213 (VLAPLPIGFAVFMVHLATIPI) form a helical membrane-spanning segment. Residues 214–240 (TGTGINPARSFGAAVIYNNEKAWDDHW) are Extracellular-facing. Residues 219–221 (NPA) carry the NPA 2 motif. The chain crosses the membrane as a helical span at residues 241-261 (IFWVGPFVGALAAAAYHQYIL). The Cytoplasmic segment spans residues 262 to 278 (RAAAIKALASFRSNPTN). Serine 271 and serine 274 each carry phosphoserine.

It belongs to the MIP/aquaporin (TC 1.A.8) family. PIP (TC 1.A.8.11) subfamily. As to expression, expressed in roots and floral buds.

The protein localises to the cell membrane. Functionally, aquaporins facilitate the transport of water and small neutral solutes across cell membranes. This is Probable aquaporin PIP2-8 (PIP2-8) from Arabidopsis thaliana (Mouse-ear cress).